The following is a 358-amino-acid chain: Protein-glutamate methylesterase/protein-glutamine glutaminase (358 aa).

The Response regulatory domain occupies 5-122 (SVLIIDDSAL…RNSLEAYTDE (118 aa)). Position 56 is a 4-aspartylphosphate (D56). The 193-residue stretch at 159–351 (GISTEKLIII…RRILARLVGA (193 aa)) folds into the CheB-type methylesterase domain. Active-site residues include S171, H197, and D293.

Belongs to the CheB family. Phosphorylated by CheA. Phosphorylation of the N-terminal regulatory domain activates the methylesterase activity.

The protein localises to the cytoplasm. It carries out the reaction [protein]-L-glutamate 5-O-methyl ester + H2O = L-glutamyl-[protein] + methanol + H(+). The catalysed reaction is L-glutaminyl-[protein] + H2O = L-glutamyl-[protein] + NH4(+). In terms of biological role, involved in chemotaxis. Part of a chemotaxis signal transduction system that modulates chemotaxis in response to various stimuli. Catalyzes the demethylation of specific methylglutamate residues introduced into the chemoreceptors (methyl-accepting chemotaxis proteins or MCP) by CheR. Also mediates the irreversible deamidation of specific glutamine residues to glutamic acid. This is Protein-glutamate methylesterase/protein-glutamine glutaminase from Nitrosomonas europaea (strain ATCC 19718 / CIP 103999 / KCTC 2705 / NBRC 14298).